The sequence spans 1051 residues: Carbamoyl phosphate synthase large chain (1051 aa).

The tract at residues 1–399 (MKETPKKVLV…SLQKAVRMLD (399 aa)) is carboxyphosphate synthetic domain. Arg127, Arg167, Gly173, Gly174, Lys206, Leu208, Glu213, Gly239, Val240, His241, Gln282, and Glu296 together coordinate ATP. An ATP-grasp 1 domain is found at 131–325 (RETMIENNLP…LAYVSAKLAL (195 aa)). Positions 282, 296, and 298 each coordinate Mg(2+). 3 residues coordinate Mn(2+): Gln282, Glu296, and Asn298. Residues 400 to 548 (IGEPGVVGGK…LTYNGTEDDL (149 aa)) are oligomerization domain. Residues 549 to 930 (EFSQGNKLLI…LKSWLSSIPN (382 aa)) form a carbamoyl phosphate synthetic domain region. Residues 673–863 (SKLLDKLGIS…LINESMKAIF (191 aa)) form the ATP-grasp 2 domain. Residues Arg709, Lys748, Ile750, Glu755, Gly779, Val780, His781, Ser782, Gln822, and Glu834 each coordinate ATP. Mg(2+) is bound by residues Gln822, Glu834, and Asn836. Residues Gln822, Glu834, and Asn836 each contribute to the Mn(2+) site. Residues 930-1051 (NRIPNKNGIA…FEISEYGGGI (122 aa)) form the MGS-like domain. Residues 931 to 1051 (RIPNKNGIAL…FEISEYGGGI (121 aa)) form an allosteric domain region.

The protein belongs to the CarB family. Composed of two chains; the small (or glutamine) chain promotes the hydrolysis of glutamine to ammonia, which is used by the large (or ammonia) chain to synthesize carbamoyl phosphate. Tetramer of heterodimers (alpha,beta)4. It depends on Mg(2+) as a cofactor. Mn(2+) serves as cofactor.

It catalyses the reaction hydrogencarbonate + L-glutamine + 2 ATP + H2O = carbamoyl phosphate + L-glutamate + 2 ADP + phosphate + 2 H(+). The enzyme catalyses hydrogencarbonate + NH4(+) + 2 ATP = carbamoyl phosphate + 2 ADP + phosphate + 2 H(+). The protein operates within amino-acid biosynthesis; L-arginine biosynthesis; carbamoyl phosphate from bicarbonate: step 1/1. It functions in the pathway pyrimidine metabolism; UMP biosynthesis via de novo pathway; (S)-dihydroorotate from bicarbonate: step 1/3. Large subunit of the glutamine-dependent carbamoyl phosphate synthetase (CPSase). CPSase catalyzes the formation of carbamoyl phosphate from the ammonia moiety of glutamine, carbonate, and phosphate donated by ATP, constituting the first step of 2 biosynthetic pathways, one leading to arginine and/or urea and the other to pyrimidine nucleotides. The large subunit (synthetase) binds the substrates ammonia (free or transferred from glutamine from the small subunit), hydrogencarbonate and ATP and carries out an ATP-coupled ligase reaction, activating hydrogencarbonate by forming carboxy phosphate which reacts with ammonia to form carbamoyl phosphate. This chain is Carbamoyl phosphate synthase large chain, found in Saccharolobus islandicus (strain M.16.27) (Sulfolobus islandicus).